The primary structure comprises 283 residues: Bifunctional protein FolD 2 (283 aa).

Residues 165-167 (GRG), Thr192, and Val233 each bind NADP(+).

Belongs to the tetrahydrofolate dehydrogenase/cyclohydrolase family. In terms of assembly, homodimer.

It carries out the reaction (6R)-5,10-methylene-5,6,7,8-tetrahydrofolate + NADP(+) = (6R)-5,10-methenyltetrahydrofolate + NADPH. It catalyses the reaction (6R)-5,10-methenyltetrahydrofolate + H2O = (6R)-10-formyltetrahydrofolate + H(+). Its pathway is one-carbon metabolism; tetrahydrofolate interconversion. Its function is as follows. Catalyzes the oxidation of 5,10-methylenetetrahydrofolate to 5,10-methenyltetrahydrofolate and then the hydrolysis of 5,10-methenyltetrahydrofolate to 10-formyltetrahydrofolate. The sequence is that of Bifunctional protein FolD 2 from Nocardioides sp. (strain ATCC BAA-499 / JS614).